A 203-amino-acid polypeptide reads, in one-letter code: Leucyl/phenylalanyl-tRNA--protein transferase (203 aa).

It belongs to the L/F-transferase family.

The protein resides in the cytoplasm. It carries out the reaction N-terminal L-lysyl-[protein] + L-leucyl-tRNA(Leu) = N-terminal L-leucyl-L-lysyl-[protein] + tRNA(Leu) + H(+). The catalysed reaction is N-terminal L-arginyl-[protein] + L-leucyl-tRNA(Leu) = N-terminal L-leucyl-L-arginyl-[protein] + tRNA(Leu) + H(+). The enzyme catalyses L-phenylalanyl-tRNA(Phe) + an N-terminal L-alpha-aminoacyl-[protein] = an N-terminal L-phenylalanyl-L-alpha-aminoacyl-[protein] + tRNA(Phe). Its function is as follows. Functions in the N-end rule pathway of protein degradation where it conjugates Leu, Phe and, less efficiently, Met from aminoacyl-tRNAs to the N-termini of proteins containing an N-terminal arginine or lysine. In Chelativorans sp. (strain BNC1), this protein is Leucyl/phenylalanyl-tRNA--protein transferase.